We begin with the raw amino-acid sequence, 1687 residues long: A-kinase anchor protein SPHKAP (1687 aa).

Positions 1 to 14 (MDVNSRLSVQSNVE) are enriched in polar residues. Disordered regions lie at residues 1–25 (MDVN…PEPQ) and 272–293 (RKHR…ENTS). A PKA-RII subunit binding domain region spans residues 914–931 (FAEELAETVVSMATEIAA). The tract at residues 964-989 (LKRKKENSSAGSTVRKHKPPRLSEIK) is disordered. Phosphoserine is present on residues Ser-1010, Ser-1070, Ser-1092, Ser-1105, Ser-1106, Ser-1109, Ser-1244, and Ser-1273. 2 disordered regions span residues 1363 to 1406 (VTEG…SPRR) and 1421 to 1520 (DQKE…PDDT). Residues 1366-1375 (GNHSPVSSPG) show a composition bias toward polar residues. Basic and acidic residues predominate over residues 1382 to 1393 (KPSDFDPRRETS). A compositionally biased stretch (polar residues) spans 1461 to 1470 (TAPSTCQSSR). The span at 1482-1494 (EVLKEDIPRDESR) shows a compositional bias: basic and acidic residues. Over residues 1495-1508 (NPPSSSEESTGSWS) the composition is skewed to low complexity.

It belongs to the AKAP110 family. In terms of assembly, interacts (via the PKA-RII subunit binding domain) with the RI subunit of PKA. Interacts with SPHK1; the interaction greatly reduces SPHK1 activity.

It is found in the cytoplasm. Anchoring protein that binds preferentially to the type I regulatory subunit of c-AMP-dependent protein kinase (PKA type I) and targets it to distinct subcellular compartments. May act as a converging factor linking cAMP and sphingosine signaling pathways. Plays a regulatory role in the modulation of SPHK1. In Mus musculus (Mouse), this protein is A-kinase anchor protein SPHKAP (Sphkap).